A 313-amino-acid chain; its full sequence is Dehydrogenase/reductase SDR family member 1 (313 aa).

The residue at position 2 (Ala2) is an N-acetylalanine. Ile19 contributes to the NAD(+) binding site. Arg21 carries the omega-N-methylarginine modification. An NAD(+)-binding site is contributed by Asp64. Residue Ser151 coordinates substrate. Tyr163, Lys167, and Thr198 together coordinate NAD(+). Catalysis depends on Tyr163, which acts as the Proton acceptor. Residues Cys235–Phe313 form a required for ER localization region.

It belongs to the short-chain dehydrogenases/reductases (SDR) family. As to expression, detected in heart, liver, adrenal glands, and at low levels in skeletal muscle, kidney, pancreas and brain.

It is found in the endoplasmic reticulum. The catalysed reaction is 17alpha-estradiol + NADP(+) = estrone + NADPH + H(+). The enzyme catalyses testosterone + NADP(+) = androst-4-ene-3,17-dione + NADPH + H(+). It catalyses the reaction prostaglandin E1 + NADPH + H(+) = prostaglandin F1 + NADP(+). It carries out the reaction isatin + NADPH + H(+) = 3-hydroxyindolin-2-one + NADP(+). Functionally, NADPH-dependent oxidoreductase which catalyzes the reduction of steroids (estrone, androstene-3,17-dione and cortisone) as well as prostaglandin E1, isatin and xenobiotics in vitro. May have a role in steroid and/or xenobiotic metabolism. In Homo sapiens (Human), this protein is Dehydrogenase/reductase SDR family member 1.